A 201-amino-acid polypeptide reads, in one-letter code: Recombination protein RecR (201 aa).

The segment at 59 to 74 (CEICGNMDTENICRIC) adopts a C4-type zinc-finger fold. One can recognise a Toprim domain in the interval 82 to 177 (SIIAIVETVA…KISRLASGIP (96 aa)).

The protein belongs to the RecR family.

In terms of biological role, may play a role in DNA repair. It seems to be involved in an RecBC-independent recombinational process of DNA repair. It may act with RecF and RecO. The sequence is that of Recombination protein RecR from Rickettsia rickettsii (strain Iowa).